The sequence spans 176 residues: MDLPGPIHDFLLVFFGSGLILGGLGVILFTNPIFSAFSLGLVLVCISLFYIIANSQFVASAQLLIYVGAINVLIIFAVMFINGLEYDKNLRLFTLGDGMTLVICTGIFFLLITTILNTSGYGIIWTTKLNQILEQDLINNSQQIGIHLSTDFFPPFELISIILLVALIGAIAVARQ.

Transmembrane regions (helical) follow at residues 10 to 30, 33 to 53, 61 to 81, 92 to 112, and 152 to 172; these read FLLVFFGSGLILGGLGVILFT, IFSAFSLGLVLVCISLFYIIA, AQLLIYVGAINVLIIFAVMFI, LFTLGDGMTLVICTGIFFLLI, and FFPPFELISIILLVALIGAIA.

Belongs to the complex I subunit 6 family. NDH is composed of at least 16 different subunits, 5 of which are encoded in the nucleus.

It is found in the plastid. It localises to the chloroplast thylakoid membrane. It carries out the reaction a plastoquinone + NADH + (n+1) H(+)(in) = a plastoquinol + NAD(+) + n H(+)(out). It catalyses the reaction a plastoquinone + NADPH + (n+1) H(+)(in) = a plastoquinol + NADP(+) + n H(+)(out). In terms of biological role, NDH shuttles electrons from NAD(P)H:plastoquinone, via FMN and iron-sulfur (Fe-S) centers, to quinones in the photosynthetic chain and possibly in a chloroplast respiratory chain. The immediate electron acceptor for the enzyme in this species is believed to be plastoquinone. Couples the redox reaction to proton translocation, and thus conserves the redox energy in a proton gradient. The protein is NAD(P)H-quinone oxidoreductase subunit 6, chloroplastic (ndhG) of Fagopyrum esculentum subsp. ancestrale (Wild buckwheat).